We begin with the raw amino-acid sequence, 435 residues long: Legumain (435 aa).

An N-terminal signal peptide occupies residues 1–17; that stretch reads MTWRVAVLLSLVLGAGA. Asn-93 carries N-linked (GlcNAc...) asparagine glycosylation. The active site involves His-150. N-linked (GlcNAc...) asparagine glycosylation occurs at Asn-169. Residue Cys-191 is the Nucleophile of the active site. N-linked (GlcNAc...) asparagine glycans are attached at residues Asn-265 and Asn-274. Positions 326 to 435 are excised as a propeptide; it reads DVKESQNLIG…AMDKVCLSHY (110 aa). Cystine bridges form between Cys-380-Cys-414 and Cys-392-Cys-431.

This sequence belongs to the peptidase C13 family. Homodimer before autocatalytic removal of the propeptide. Monomer after autocatalytic processing. May interact with integrins. Post-translationally, glycosylated. In terms of processing, activated by autocatalytic processing at pH 4. In terms of tissue distribution, detected in kidney proximal tubules (at protein level). Ubiquitous. Particularly abundant in kidney and placenta.

It localises to the lysosome. The catalysed reaction is Hydrolysis of proteins and small molecule substrates at -Asn-|-Xaa- bonds.. Inhibited by cystatin-C. Its function is as follows. Has a strict specificity for hydrolysis of asparaginyl bonds. Can also cleave aspartyl bonds slowly, especially under acidic conditions. Involved in the processing of proteins for MHC class II antigen presentation in the lysosomal/endosomal system. Also involved in MHC class I antigen presentation in cross-presenting dendritic cells by mediating cleavage and maturation of Perforin-2 (MPEG1), thereby promoting antigen translocation in the cytosol. Required for normal lysosomal protein degradation in renal proximal tubules. Required for normal degradation of internalized EGFR. Plays a role in the regulation of cell proliferation via its role in EGFR degradation. The polypeptide is Legumain (Lgmn) (Mus musculus (Mouse)).